A 657-amino-acid chain; its full sequence is UvrABC system protein B (657 aa).

The Helicase ATP-binding domain occupies Asn-25 to Arg-182. Gly-38–Thr-45 is a binding site for ATP. Positions Tyr-91 to Ile-114 match the Beta-hairpin motif. One can recognise a Helicase C-terminal domain in the interval Gln-429–Ile-595. The 36-residue stretch at Asp-621 to Gly-656 folds into the UVR domain.

It belongs to the UvrB family. Forms a heterotetramer with UvrA during the search for lesions. Interacts with UvrC in an incision complex.

It is found in the cytoplasm. Functionally, the UvrABC repair system catalyzes the recognition and processing of DNA lesions. A damage recognition complex composed of 2 UvrA and 2 UvrB subunits scans DNA for abnormalities. Upon binding of the UvrA(2)B(2) complex to a putative damaged site, the DNA wraps around one UvrB monomer. DNA wrap is dependent on ATP binding by UvrB and probably causes local melting of the DNA helix, facilitating insertion of UvrB beta-hairpin between the DNA strands. Then UvrB probes one DNA strand for the presence of a lesion. If a lesion is found the UvrA subunits dissociate and the UvrB-DNA preincision complex is formed. This complex is subsequently bound by UvrC and the second UvrB is released. If no lesion is found, the DNA wraps around the other UvrB subunit that will check the other stand for damage. This Clostridium beijerinckii (strain ATCC 51743 / NCIMB 8052) (Clostridium acetobutylicum) protein is UvrABC system protein B.